Here is a 287-residue protein sequence, read N- to C-terminus: Putative holocytochrome-c1 synthase (287 aa).

Residues 1–12 (MRGFGSDSSQAS) are compositionally biased toward polar residues. Disordered stretches follow at residues 1 to 63 (MRGF…QPSS) and 81 to 100 (QSQSANSTQQAQPPKLSAPL). 2 stretches are compositionally biased toward low complexity: residues 31-63 (QARAAQSASTSAAPALPQSVQVAPASQPSQPSS) and 81-92 (QSQSANSTQQAQ).

It belongs to the cytochrome c-type heme lyase family.

It is found in the mitochondrion inner membrane. The enzyme catalyses holo-[cytochrome c] = apo-[cytochrome c] + heme b. Its function is as follows. Probable lyase that catalyzes the covalent linking of the heme group to the cytochrome C apoprotein to produce the mature functional cytochrome. The sequence is that of Putative holocytochrome-c1 synthase from Chaetomium thermophilum (strain DSM 1495 / CBS 144.50 / IMI 039719) (Thermochaetoides thermophila).